The primary structure comprises 336 residues: D-altritol 5-dehydrogenase (336 aa).

The Zn(2+) site is built by Cys37, His59, Glu60, Cys89, Cys92, Cys95, and Cys103.

It belongs to the zinc-containing alcohol dehydrogenase family. The cofactor is Zn(2+).

The enzyme catalyses D-altritol + NAD(+) = keto-D-tagatose + NADH + H(+). Its pathway is carbohydrate metabolism. Functionally, involved in D-altritol catabolism. Catalyzes the oxidation of D-altritol to D-tagatose. This chain is D-altritol 5-dehydrogenase, found in Agrobacterium fabrum (strain C58 / ATCC 33970) (Agrobacterium tumefaciens (strain C58)).